A 354-amino-acid polypeptide reads, in one-letter code: Chorismate synthase (354 aa).

Residue Arg48 coordinates NADP(+). Residues 126–128, Ala278, 293–297, and Arg319 each bind FMN; these read RAS and KPIPS.

It belongs to the chorismate synthase family. Homotetramer. It depends on FMNH2 as a cofactor.

The catalysed reaction is 5-O-(1-carboxyvinyl)-3-phosphoshikimate = chorismate + phosphate. It functions in the pathway metabolic intermediate biosynthesis; chorismate biosynthesis; chorismate from D-erythrose 4-phosphate and phosphoenolpyruvate: step 7/7. In terms of biological role, catalyzes the anti-1,4-elimination of the C-3 phosphate and the C-6 proR hydrogen from 5-enolpyruvylshikimate-3-phosphate (EPSP) to yield chorismate, which is the branch point compound that serves as the starting substrate for the three terminal pathways of aromatic amino acid biosynthesis. This reaction introduces a second double bond into the aromatic ring system. The sequence is that of Chorismate synthase from Desulfosudis oleivorans (strain DSM 6200 / JCM 39069 / Hxd3) (Desulfococcus oleovorans).